Reading from the N-terminus, the 429-residue chain is Formate-dependent phosphoribosylglycinamide formyltransferase (429 aa).

Residues 26 to 27 and E86 each bind N(1)-(5-phospho-beta-D-ribosyl)glycinamide; that span reads EL. ATP contacts are provided by residues R118, K159, 199–202, and E207; that span reads EEHI. The 197-residue stretch at 123–319 folds into the ATP-grasp domain; sequence ETLAREAKVP…EFGLHLRAVL (197 aa). The Mg(2+) site is built by E276 and E288. N(1)-(5-phospho-beta-D-ribosyl)glycinamide-binding positions include D295, K375, and 382–383; that span reads RR.

The protein belongs to the PurK/PurT family. In terms of assembly, homodimer.

It carries out the reaction N(1)-(5-phospho-beta-D-ribosyl)glycinamide + formate + ATP = N(2)-formyl-N(1)-(5-phospho-beta-D-ribosyl)glycinamide + ADP + phosphate + H(+). The protein operates within purine metabolism; IMP biosynthesis via de novo pathway; N(2)-formyl-N(1)-(5-phospho-D-ribosyl)glycinamide from N(1)-(5-phospho-D-ribosyl)glycinamide (formate route): step 1/1. In terms of biological role, involved in the de novo purine biosynthesis. Catalyzes the transfer of formate to 5-phospho-ribosyl-glycinamide (GAR), producing 5-phospho-ribosyl-N-formylglycinamide (FGAR). Formate is provided by PurU via hydrolysis of 10-formyl-tetrahydrofolate. The polypeptide is Formate-dependent phosphoribosylglycinamide formyltransferase (Thermococcus kodakarensis (strain ATCC BAA-918 / JCM 12380 / KOD1) (Pyrococcus kodakaraensis (strain KOD1))).